The chain runs to 507 residues: Zinc finger protein Aiolos (507 aa).

Positions 1–85 (MEDIQPTVEL…PMGDAEESEM (85 aa)) are disordered. Position 20 is a phosphothreonine (Thr-20). Residues Ser-22 and Ser-42 each carry the phosphoserine modification. 2 stretches are compositionally biased toward basic and acidic residues: residues 33-46 (KPHE…REAP) and 56-72 (DSMK…ENIM). Glycyl lysine isopeptide (Lys-Gly) (interchain with G-Cter in SUMO2) cross-links involve residues Lys-61, Lys-73, and Lys-100. C2H2-type zinc fingers lie at residues 117 to 139 (MNCD…KRSH), 145 to 167 (FQCN…IKLH), and 173 to 195 (FKCH…LRTH). Residues 201-223 (YKCEFCGRSYKQRSSLEEHKERC) form a C2H2-type 4; atypical zinc finger. Residue Lys-244 forms a Glycyl lysine isopeptide (Lys-Gly) (interchain with G-Cter in SUMO2) linkage. Thr-325 carries the post-translational modification Phosphothreonine. The interval 370 to 396 (LPSERGLSPNNSAQDSTDTDSNHEDRQ) is disordered. Ser-377 carries the post-translational modification Phosphoserine. The segment at 450–472 (FRCDHCHVLFLDYVMFTIHMGCH) adopts a C2H2-type 5 zinc-finger fold. The interval 450 to 502 (FRCDHCHVLFLDYVMFTIHMGCHGFRDPFECNMCGYRSHDRYEFSSHIARGEH) is mediates homodimerization and heterodimerization. The segment at 478 to 502 (FECNMCGYRSHDRYEFSSHIARGEH) adopts a C2H2-type 6; atypical zinc-finger fold.

It belongs to the Ikaros C2H2-type zinc-finger protein family. In terms of assembly, homodimer. Heterodimer with other IKAROS family members. Interacts with IKZF4 and IKZF5. Interacts with HRAS. Interacts with FOXP3; this interaction may be required for silencing target genes and regulating the suppressive activity of FOXP3-positive regulatory T-cells (Treg). Interacts with BCL21L isoform Bcl-X(L); this interaction blocks the anti-apoptotic role of BCL21L. Associates with histone deacetylase complexes containing HDAC1, MTA2 and SIN3A. Interacts with IKZF1. As to expression, expression is restricted to lymphoid tissues. Expressed at highest levels in spleen and at lower levels in the thymus and bone marrow. First detected in more committed lymphoid progenitors and strongly up-regulated as these differentiate into pre-T and pre-B cell precursors.

It localises to the nucleus. The protein localises to the cytoplasm. In terms of biological role, transcription factor that plays an important role in the regulation of lymphocyte differentiation. Binds to GGGAA. Plays an essential role in regulation of B-cell differentiation, proliferation and maturation to an effector state. Involved in regulating BCL2 expression and controlling apoptosis in T-cells in an IL2-dependent manner. This Mus musculus (Mouse) protein is Zinc finger protein Aiolos (Ikzf3).